The following is an 827-amino-acid chain: SID1 transmembrane family member 1 (827 aa).

A signal peptide spans 1-19 (MRGCLRLALLCALPWLLLA). At 20–309 (ASPGHPAKSP…SIKESVYVKS (290 aa)) the chain is on the extracellular side. N57, N67, N83, N136, and N282 each carry an N-linked (GlcNAc...) asparagine glycan. Residues 310 to 330 (SLFSVFIFLSFYLGCLLVGFV) form a helical membrane-spanning segment. At 331–442 (HYLRFQRKSI…DRRIVSKKYK (112 aa)) the chain is on the cytoplasmic side. Positions 355 to 408 (ASHPIAASTPEGSNYGTIDESSSSPGRQMSSSDGGPPGQSDTDSSVEESDFDTM) are disordered. Residues 364–374 (PEGSNYGTIDE) are compositionally biased toward polar residues. Over residues 375–397 (SSSSPGRQMSSSDGGPPGQSDTD) the composition is skewed to low complexity. Over residues 398-408 (SSVEESDFDTM) the composition is skewed to acidic residues. The chain crosses the membrane as a helical span at residues 443 to 463 (IYFWNIITIAVFYALPVIQLV). Residues 464–494 (ITYQTVVNVTGNQDICYYNFLCAHPLGVLSA) are Extracellular-facing. The N-linked (GlcNAc...) asparagine glycan is linked to N471. The chain crosses the membrane as a helical span at residues 495 to 515 (FNNILSNLGHVLLGFLFLLIV). Topologically, residues 516 to 541 (LRRDILHRRALEAKDIFAVEYGIPKH) are cytoplasmic. The chain crosses the membrane as a helical span at residues 542 to 562 (FGLFYAMGIALMMEGVLSACY). At 563 to 572 (HVCPNYSNFQ) the chain is on the extracellular side. N567 is a glycosylation site (N-linked (GlcNAc...) asparagine). The chain crosses the membrane as a helical span at residues 573 to 590 (FDTSFMYMIAGLCMLKLY). Topologically, residues 591-600 (QTRHPDINAS) are cytoplasmic. The chain crosses the membrane as a helical span at residues 601–621 (AYSAYASFAVVIMVTVLGVVF). Topologically, residues 622-626 (GKNDV) are extracellular. A helical membrane pass occupies residues 627 to 647 (WFWVIFSAIHVLASLALSTQI). At 648–683 (YYMGRFKIDLGIFRRAAMVFYTDCIQQCSRPLYMDR) the chain is on the cytoplasmic side. A helical membrane pass occupies residues 684–704 (MVLLVVGNLVNWSFALFGLIY). The Extracellular portion of the chain corresponds to 705–710 (RPRDFA). A helical membrane pass occupies residues 711–731 (SYMLGIFICNLLLYLAFYIIM). At 732–741 (KLRSSEKVLP) the chain is on the cytoplasmic side. The helical transmembrane segment at 742–762 (VPLFCIVATAVMWAAALYFFF) threads the bilayer. Topologically, residues 763–791 (QNLSSWEGTPAESREKNRECILLDFFDDH) are extracellular. N764 is a glycosylation site (N-linked (GlcNAc...) asparagine). A helical membrane pass occupies residues 792 to 812 (DIWHFLSATALFFSFLVLLTL). Topologically, residues 813-827 (DDDLDVVRRDQIPVF) are cytoplasmic.

Belongs to the SID1 family.

The protein localises to the membrane. Functionally, in vitro binds long double-stranded RNA (dsRNA) (500 and 700 base pairs), but not dsRNA shorter than 300 bp. Not involved in RNA autophagy, a process in which RNA is directly imported into lysosomes in an ATP-dependent manner, and degraded. This Homo sapiens (Human) protein is SID1 transmembrane family member 1 (SIDT1).